A 792-amino-acid chain; its full sequence is MAAASGEKEEEEKKLQERAPIRRTAWMLANFVVLFLLLALLVRRATAADAEERGVGGAAWRVAFACEAWFAFVWLLNMNAKWSPARFDTYPENLAGRCGAAHRPRKSSCISGHLDLMRRQCALMQDRRAAGGRHVRDDGGPGARAAGGDGEQGALAARRRLLPGRRRRRRRRRLACYVSDDGCSPVTYYALREAAGFARTWVPFCRRHGVAVRAPFRYFASAPEFGPADRKFLDDWTFMKSEYDKLVRRIEDADETTLLRQGGGEFAEFMDAKRTNHRAIVKVIWDNNSKNRIGEEGGFPHLIYVSREKSPGHHHHYKAGAMNALTRVSAVMTNAPIMLNVDCDMFANDPQVVLHAMCLLLGFDDEISSGFVQVPQSFYGDLKDDPFGNKLEVIYKGLFYGGTGCFHCRKAIYGIEPDSIVVGREGAAGSPSYKELQFKFESSEELKESARYIISGDMSGEPIVDISSHIEVAKEVSSCNYESGTHWGLEVGWAYGSMTEDILTGQRIHAAGWRSAKLETEPPAFLGCAPTGGPACLTQFKRWATGLFEILISQNNPLLLSIFKHLQFRQCLAYLTLYVWAVRGFVELCYELLVPYCLLTNQSFLSKASENCFNITLALFLTYNTYNFVEYMECGLSVRAWWNNHRMQRIISASAWLLAFFTVLLKTIGLSETVFEVTRKEKSTSDGNGQNDEVDPERFTFDASPVFIPVTALTMLNIVAITIGTWRAVFGTTEDVPGGPGISEFMSCGWLLLCLLPFVRGLVGKGSYGIPWSVKLKASLLVALFLFCSNRN.

A run of 2 helical transmembrane segments spans residues 25-45 (AWMLANFVVLFLLLALLVRRA) and 55-75 (VGGAAWRVAFACEAWFAFVWL). The interval 132–154 (GRHVRDDGGPGARAAGGDGEQGA) is disordered. Residues 140 to 151 (GPGARAAGGDGE) are compositionally biased toward gly residues. Residues aspartate 181 and aspartate 501 contribute to the active site. 6 helical membrane-spanning segments follow: residues 579–599 (VWAVRGFVELCYELLVPYCLL), 613–632 (FNITLALFLTYNTYNFVEYM), 650–670 (IISASAWLLAFFTVLLKTIGL), 706–726 (VFIPVTALTMLNIVAITIGTW), 739–759 (GPGISEFMSCGWLLLCLLPFV), and 768–788 (YGIPWSVKLKASLLVALFLFC).

This sequence belongs to the glycosyltransferase 2 family. Plant cellulose synthase-like H subfamily.

Its subcellular location is the golgi apparatus membrane. Functionally, thought to be a Golgi-localized beta-glycan synthase that polymerize the backbones of noncellulosic polysaccharides (hemicelluloses) of plant cell wall. The protein is Putative cellulose synthase-like protein H3 (CSLH3) of Oryza sativa subsp. japonica (Rice).